Reading from the N-terminus, the 95-residue chain is Co-chaperonin GroES (95 aa).

Belongs to the GroES chaperonin family. Heptamer of 7 subunits arranged in a ring. Interacts with the chaperonin GroEL.

It localises to the cytoplasm. Its function is as follows. Together with the chaperonin GroEL, plays an essential role in assisting protein folding. The GroEL-GroES system forms a nano-cage that allows encapsulation of the non-native substrate proteins and provides a physical environment optimized to promote and accelerate protein folding. GroES binds to the apical surface of the GroEL ring, thereby capping the opening of the GroEL channel. This chain is Co-chaperonin GroES, found in Caldicellulosiruptor bescii (strain ATCC BAA-1888 / DSM 6725 / KCTC 15123 / Z-1320) (Anaerocellum thermophilum).